A 431-amino-acid chain; its full sequence is Histidinol dehydrogenase (431 aa).

Y127, Q189, and N212 together coordinate NAD(+). 3 residues coordinate substrate: S237, Q259, and H262. The Zn(2+) site is built by Q259 and H262. Active-site proton acceptor residues include E326 and H327. Residues H327, D360, E414, and H419 each coordinate substrate. Residue D360 coordinates Zn(2+). Residue H419 participates in Zn(2+) binding.

The protein belongs to the histidinol dehydrogenase family. The cofactor is Zn(2+).

It carries out the reaction L-histidinol + 2 NAD(+) + H2O = L-histidine + 2 NADH + 3 H(+). Its pathway is amino-acid biosynthesis; L-histidine biosynthesis; L-histidine from 5-phospho-alpha-D-ribose 1-diphosphate: step 9/9. In terms of biological role, catalyzes the sequential NAD-dependent oxidations of L-histidinol to L-histidinaldehyde and then to L-histidine. This chain is Histidinol dehydrogenase, found in Xanthomonas campestris pv. campestris (strain 8004).